Here is a 393-residue protein sequence, read N- to C-terminus: 6-hydroxy-3-succinoylpyridine 3-monooxygenase HspB (393 aa).

Residues Arg-6 to Ala-35 and Met-277 to Asp-287 each bind FAD.

The protein belongs to the PheA/TfdB FAD monooxygenase family. In terms of assembly, homodimer. It depends on FAD as a cofactor.

The catalysed reaction is 4-(6-hydroxypyridin-3-yl)-4-oxobutanoate + 2 NADH + O2 + 2 H(+) = 2,5-dihydroxypyridine + succinate semialdehyde + 2 NAD(+) + H2O. Its pathway is alkaloid degradation; nicotine degradation. Its activity is regulated as follows. Inhibited by Cu(2+) and Zn(2+). Its function is as follows. Involved in the nicotine degradation. Catalyzes the cleavage of 6-hydroxy-3-succinoylpyridine (HSP) by incorporation of oxygen at the 3-position to produce to 2,5-dihydroxypyridine (DHP) and succinic semialdehyde. The sequence is that of 6-hydroxy-3-succinoylpyridine 3-monooxygenase HspB from Pseudomonas putida (strain DSM 28022 / S16).